The chain runs to 423 residues: uncharacterized protein (423 aa).

A signal peptide spans 1 to 16 (MKSRIFFITLLTIVAA). The Extracellular segment spans residues 17 to 402 (QESADQLCSS…SSSAKEEQTS (386 aa)). Intrachain disulfides connect Cys-24–Cys-217, Cys-33–Cys-43, Cys-36–Cys-68, Cys-46–Cys-57, Cys-219–Cys-238, Cys-230–Cys-241, Cys-243–Cys-252, Cys-254–Cys-288, Cys-271–Cys-286, Cys-280–Cys-291, Cys-293–Cys-303, Cys-305–Cys-327, Cys-310–Cys-325, Cys-319–Cys-330, Cys-332–Cys-341, and Cys-343–Cys-350. Asn-65 is a glycosylation site (N-linked (GlcNAc...) asparagine). The interval 215 to 350 (CGCECEKHPE…CSCSTASNNC (136 aa)) is cysteine-rich tandem repeats. 3 I-EGF domains span residues 219 to 253 (CEKH…DKCE), 254 to 304 (CPLA…KFCQ), and 305 to 342 (CDND…DDCS). Asn-274 is a glycosylation site (N-linked (GlcNAc...) asparagine). N-linked (GlcNAc...) asparagine glycosylation occurs at Asn-307. The interval 354–406 (GTPAPEEKDKPESVPEEPEATEKPDDMPSDSDLEKELDESSSAKEEQTSSSGV) is disordered. Positions 380 to 392 (MPSDSDLEKELDE) are enriched in acidic residues. The chain crosses the membrane as a helical span at residues 403–421 (SSGVVSRVCVLLTFFLLVL). The Cytoplasmic portion of the chain corresponds to 422-423 (NF).

This sequence belongs to the integrin beta chain family.

The protein resides in the membrane. This is an uncharacterized protein from Caenorhabditis elegans.